The sequence spans 138 residues: Large ribosomal subunit protein uL29 (138 aa).

Residues 1–79 (MAKSKMLDLR…TNKVIKADYN (79 aa)) are large ribosomal subunit protein uL29. Residues 80–138 (KAVEEAEKAGKEVRAKQRKFLEEQYGQQSQTKVNEADIQKAMQAAEQETVEPDTKGETK) form a unknown region. The segment at 103–138 (QYGQQSQTKVNEADIQKAMQAAEQETVEPDTKGETK) is disordered.

It belongs to the universal ribosomal protein uL29 family.

In Mycoplasma capricolum subsp. capricolum (strain California kid / ATCC 27343 / NCTC 10154), this protein is Large ribosomal subunit protein uL29.